The chain runs to 437 residues: Ribosomal protein uS12 methylthiotransferase RimO (437 aa).

An MTTase N-terminal domain is found at 3-118; the sequence is KKFYITTLGC…AGKILREKFP (116 aa). Residues cysteine 12, cysteine 48, cysteine 81, cysteine 157, cysteine 161, and cysteine 164 each coordinate [4Fe-4S] cluster. The 228-residue stretch at 143–370 folds into the Radical SAM core domain; sequence NYSKPYAYVK…RDSHLEILEE (228 aa). The region spanning 373-437 is the TRAM domain; that stretch reads ESRIGRTYDA…YEYDMNGTWV (65 aa).

Belongs to the methylthiotransferase family. RimO subfamily. The cofactor is [4Fe-4S] cluster.

The protein localises to the cytoplasm. The catalysed reaction is L-aspartate(89)-[ribosomal protein uS12]-hydrogen + (sulfur carrier)-SH + AH2 + 2 S-adenosyl-L-methionine = 3-methylsulfanyl-L-aspartate(89)-[ribosomal protein uS12]-hydrogen + (sulfur carrier)-H + 5'-deoxyadenosine + L-methionine + A + S-adenosyl-L-homocysteine + 2 H(+). Its function is as follows. Catalyzes the methylthiolation of an aspartic acid residue of ribosomal protein uS12. The sequence is that of Ribosomal protein uS12 methylthiotransferase RimO from Leptospira interrogans serogroup Icterohaemorrhagiae serovar copenhageni (strain Fiocruz L1-130).